The following is a 138-amino-acid chain: Transcription antitermination protein NusB (138 aa).

Belongs to the NusB family.

In terms of biological role, involved in transcription antitermination. Required for transcription of ribosomal RNA (rRNA) genes. Binds specifically to the boxA antiterminator sequence of the ribosomal RNA (rrn) operons. This is Transcription antitermination protein NusB from Alkaliphilus oremlandii (strain OhILAs) (Clostridium oremlandii (strain OhILAs)).